We begin with the raw amino-acid sequence, 212 residues long: Riboflavin synthase (212 aa).

2 Lumazine-binding repeats span residues 1 to 97 (MFTG…VGGH) and 98 to 195 (LVSG…VDSV). Residues 4 to 6 (GIV), 48 to 50 (CLT), 62 to 67 (DIVEET), 101 to 103 (GHI), Lys-137, 146 to 148 (SLT), and 160 to 165 (FLIPET) each bind 2,4-dihydroxypteridine.

As to quaternary structure, homotrimer.

The catalysed reaction is 2 6,7-dimethyl-8-(1-D-ribityl)lumazine + H(+) = 5-amino-6-(D-ribitylamino)uracil + riboflavin. Its pathway is cofactor biosynthesis; riboflavin biosynthesis; riboflavin from 2-hydroxy-3-oxobutyl phosphate and 5-amino-6-(D-ribitylamino)uracil: step 2/2. In terms of biological role, catalyzes the dismutation of two molecules of 6,7-dimethyl-8-ribityllumazine, resulting in the formation of riboflavin and 5-amino-6-(D-ribitylamino)uracil. This chain is Riboflavin synthase (ribE), found in Buchnera aphidicola subsp. Baizongia pistaciae (strain Bp).